The sequence spans 150 residues: MKDEVALLATVTLVGVLLQAYFSLQVISARRAFHVSPPLTSGPPEFERVFRAQVNCSEYFPLFLATLWVAGIFFHEGAAALCGLFYLFARLRYFQGYARSAQLRLTPLYASARALWLLVAMAALGLLVHFLPGTLRTALFRWLQMLLPMA.

Topologically, residues 1 to 6 are cytoplasmic; it reads MKDEVA. A helical membrane pass occupies residues 7–27; the sequence is LLATVTLVGVLLQAYFSLQVI. The Lumenal portion of the chain corresponds to 28-48; it reads SARRAFHVSPPLTSGPPEFER. R30 lines the glutathione pocket. Residue R31 is the Proton donor of the active site. S36 carries the post-translational modification Phosphoserine. Residues 49-69 form a helical membrane-spanning segment; that stretch reads VFRAQVNCSEYFPLFLATLWV. Glutathione is bound by residues 51–55, Q53, and 58–59; these read RAQVN and EY. At 70 to 73 the chain is on the cytoplasmic side; the sequence is AGIF. The chain crosses the membrane as a helical span at residues 74–94; sequence FHEGAAALCGLFYLFARLRYF. 93 to 97 contacts glutathione; the sequence is YFQGY. The Lumenal portion of the chain corresponds to 95-104; the sequence is QGYARSAQLR. R104 serves as the catalytic Proton acceptor. A helical transmembrane segment spans residues 105–124; it reads LTPLYASARALWLLVAMAAL. Residues 125–150 are Cytoplasmic-facing; it reads GLLVHFLPGTLRTALFRWLQMLLPMA.

It belongs to the MAPEG family. In terms of assembly, homotrimer. Interacts with ALOX5AP and ALOX5. Post-translationally, phosphorylation at Ser-36 by RPS6KB1 inhibits the leukotriene-C4 synthase activity. Widely expressed.

The protein resides in the nucleus outer membrane. The protein localises to the endoplasmic reticulum membrane. It is found in the nucleus membrane. It catalyses the reaction leukotriene C4 = leukotriene A4 + glutathione. The enzyme catalyses (13S,14S)-epoxy-(4Z,7Z,9E,11E,16Z,19Z)-docosahexaenoate + glutathione = (13R)-S-glutathionyl-(14S)-hydroxy-(4Z,7Z,9E,11E,16Z,19Z)-docosahexaenoate. Its pathway is lipid metabolism; leukotriene C4 biosynthesis. With respect to regulation, inhibited by MK886. In terms of biological role, catalyzes the conjugation of leukotriene A4 with reduced glutathione (GSH) to form leukotriene C4 with high specificity. Can also catalyze the transfer of a glutathionyl group from glutathione (GSH) to 13(S),14(S)-epoxy-docosahexaenoic acid to form maresin conjugate in tissue regeneration 1 (MCTR1), a bioactive lipid mediator that possess potent anti-inflammatory and proresolving actions. This chain is Leukotriene C4 synthase (Ltc4s), found in Mus musculus (Mouse).